A 423-amino-acid chain; its full sequence is Histidine--tRNA ligase (423 aa).

Belongs to the class-II aminoacyl-tRNA synthetase family. Homodimer.

It localises to the cytoplasm. It carries out the reaction tRNA(His) + L-histidine + ATP = L-histidyl-tRNA(His) + AMP + diphosphate + H(+). This chain is Histidine--tRNA ligase, found in Rhodococcus erythropolis (strain PR4 / NBRC 100887).